Reading from the N-terminus, the 189-residue chain is Ribosome maturation factor RimM (189 aa).

A PRC barrel domain is found at 110–189 (DDEYYWKDLI…TVTVDWDPNF (80 aa)).

It belongs to the RimM family. As to quaternary structure, binds ribosomal protein uS19.

Its subcellular location is the cytoplasm. An accessory protein needed during the final step in the assembly of 30S ribosomal subunit, possibly for assembly of the head region. Essential for efficient processing of 16S rRNA. May be needed both before and after RbfA during the maturation of 16S rRNA. It has affinity for free ribosomal 30S subunits but not for 70S ribosomes. The protein is Ribosome maturation factor RimM of Blochmanniella pennsylvanica (strain BPEN).